Reading from the N-terminus, the 946-residue chain is Isoleucine--tRNA ligase (946 aa).

The 'HIGH' region signature appears at 58 to 68 (PYANGSIHIGH). Glu568 lines the L-isoleucyl-5'-AMP pocket. A 'KMSKS' region motif is present at residues 609–613 (KMSKS). Residue Lys612 participates in ATP binding. Positions 908, 911, 928, and 931 each coordinate Zn(2+).

Belongs to the class-I aminoacyl-tRNA synthetase family. IleS type 1 subfamily. Monomer. Requires Zn(2+) as cofactor.

The protein resides in the cytoplasm. It carries out the reaction tRNA(Ile) + L-isoleucine + ATP = L-isoleucyl-tRNA(Ile) + AMP + diphosphate. In terms of biological role, catalyzes the attachment of isoleucine to tRNA(Ile). As IleRS can inadvertently accommodate and process structurally similar amino acids such as valine, to avoid such errors it has two additional distinct tRNA(Ile)-dependent editing activities. One activity is designated as 'pretransfer' editing and involves the hydrolysis of activated Val-AMP. The other activity is designated 'posttransfer' editing and involves deacylation of mischarged Val-tRNA(Ile). The chain is Isoleucine--tRNA ligase from Chromohalobacter salexigens (strain ATCC BAA-138 / DSM 3043 / CIP 106854 / NCIMB 13768 / 1H11).